A 245-amino-acid polypeptide reads, in one-letter code: Polyhedrin (245 aa).

This sequence belongs to the polyhedrin family.

Functionally, major component of the virus occlusion bodies, which are large proteinaceous structures (polyhedra), that protect the virus from the outside environment for extended periods until they are ingested by insect larvae. The protein is Polyhedrin of Lepidoptera (butterflies and moths).